Consider the following 302-residue polypeptide: Serine/threonine-protein phosphatase alpha-3 isoform (302 aa).

4 residues coordinate Mn(2+): D62, H64, D90, and N122. The active-site Proton donor is H123. Residues H171 and H246 each contribute to the Mn(2+) site.

This sequence belongs to the PPP phosphatase family. PP-1 subfamily. In terms of assembly, interacts with Nop17l. It depends on Mn(2+) as a cofactor.

It carries out the reaction O-phospho-L-seryl-[protein] + H2O = L-seryl-[protein] + phosphate. It catalyses the reaction O-phospho-L-threonyl-[protein] + H2O = L-threonyl-[protein] + phosphate. This is Serine/threonine-protein phosphatase alpha-3 isoform (Pp1-13C) from Drosophila melanogaster (Fruit fly).